A 238-amino-acid polypeptide reads, in one-letter code: Ubiquinone biosynthesis O-methyltransferase (238 aa).

The S-adenosyl-L-methionine site is built by Arg-38, Gly-57, Asp-78, and Leu-124.

The protein belongs to the methyltransferase superfamily. UbiG/COQ3 family.

It carries out the reaction a 3-demethylubiquinol + S-adenosyl-L-methionine = a ubiquinol + S-adenosyl-L-homocysteine + H(+). The catalysed reaction is a 3-(all-trans-polyprenyl)benzene-1,2-diol + S-adenosyl-L-methionine = a 2-methoxy-6-(all-trans-polyprenyl)phenol + S-adenosyl-L-homocysteine + H(+). It participates in cofactor biosynthesis; ubiquinone biosynthesis. Its function is as follows. O-methyltransferase that catalyzes the 2 O-methylation steps in the ubiquinone biosynthetic pathway. This is Ubiquinone biosynthesis O-methyltransferase from Marinobacter nauticus (strain ATCC 700491 / DSM 11845 / VT8) (Marinobacter aquaeolei).